The primary structure comprises 389 residues: Chalcone synthase 4-1 (389 aa).

The active site involves Cys164.

Belongs to the thiolase-like superfamily. Chalcone/stilbene synthases family.

It carries out the reaction (E)-4-coumaroyl-CoA + 3 malonyl-CoA + 3 H(+) = 2',4,4',6'-tetrahydroxychalcone + 3 CO2 + 4 CoA. It participates in secondary metabolite biosynthesis; flavonoid biosynthesis. The primary product of this enzyme is 4,2',4',6'-tetrahydroxychalcone (also termed naringenin-chalcone or chalcone) which can under specific conditions spontaneously isomerize into naringenin. The chain is Chalcone synthase 4-1 (CHS4-1) from Medicago sativa (Alfalfa).